Consider the following 195-residue polypeptide: Thymidine kinase (195 aa).

ATP is bound by residues 9 to 16 (STMNAGKS) and 87 to 90 (DEAQ). Residue glutamate 88 is the Proton acceptor of the active site. 4 residues coordinate Zn(2+): cysteine 145, cysteine 147, cysteine 182, and histidine 185.

This sequence belongs to the thymidine kinase family. As to quaternary structure, homotetramer.

It localises to the cytoplasm. It carries out the reaction thymidine + ATP = dTMP + ADP + H(+). In Jannaschia sp. (strain CCS1), this protein is Thymidine kinase.